We begin with the raw amino-acid sequence, 684 residues long: Glycine--tRNA ligase beta subunit (684 aa).

This sequence belongs to the class-II aminoacyl-tRNA synthetase family. Tetramer of two alpha and two beta subunits.

The protein resides in the cytoplasm. The enzyme catalyses tRNA(Gly) + glycine + ATP = glycyl-tRNA(Gly) + AMP + diphosphate. This Pseudomonas savastanoi pv. phaseolicola (strain 1448A / Race 6) (Pseudomonas syringae pv. phaseolicola (strain 1448A / Race 6)) protein is Glycine--tRNA ligase beta subunit.